The primary structure comprises 345 residues: C5a anaphylatoxin chemotactic receptor 1 (345 aa).

At 1–32 the chain is on the extracellular side; sequence MMVTVSYDYDYNSTFLPDGFVDNYVERLSFGD. A sulfotyrosine mark is found at Tyr-9 and Tyr-11. Residue Asn-12 is glycosylated (N-linked (GlcNAc...) asparagine). Residues 33–59 traverse the membrane as a helical segment; that stretch reads LVAVVIMVVVFLVGVPGNALVVWVTAC. Topologically, residues 60 to 64 are cytoplasmic; the sequence is EARRH. Residues 65–88 form a helical membrane-spanning segment; the sequence is INAIWFLNLAAADLLSCLALPILL. The Extracellular segment spans residues 89 to 105; sequence VSTVHLNHWYFGDTACK. Cysteines 104 and 183 form a disulfide. Residues 106 to 127 form a helical membrane-spanning segment; sequence VLPSLILLNMYTSILLLATISA. Topologically, residues 128-148 are cytoplasmic; the sequence is DRLLLVLSPIWCQRFRGGCLA. Residues 149-169 traverse the membrane as a helical segment; that stretch reads WTACGLAWVLALLLSSPSFLY. At 170-195 the chain is on the extracellular side; sequence RRTHNEHFSFKVYCVTDYGRDISKER. The chain crosses the membrane as a helical span at residues 196–221; sequence AVALVRLLVGFIVPLITLTACYTFLL. Residues 222-237 lie on the Cytoplasmic side of the membrane; the sequence is LRTWSRKATRSAKTVK. Residues 238-260 traverse the membrane as a helical segment; the sequence is VVVAVVSSFFVFWLPYQVTGILL. Over 261–277 the chain is Extracellular; that stretch reads AWHSPNSATYRNTKALD. Residues 278–298 form a helical membrane-spanning segment; sequence AVCVAFAYINCCINPIIYVVA. The Cytoplasmic portion of the chain corresponds to 299 to 345; sequence GHGFQGRLLKSLPSVLRNVLTEESLDKRHQSFARSTVDTMPQKSESV. 5 positions are modified to phosphoserine: Ser-309, Ser-312, Ser-322, Ser-329, and Ser-333.

Belongs to the G-protein coupled receptor 1 family. As to quaternary structure, homodimer. May also form higher-order oligomers. Interacts (when phosphorylated) with ARRB1 and ARRB2; the interaction is associated with internalization of C5aR. In terms of processing, sulfation plays a critical role in the association of C5aR with C5a, but no significant role in the ability of the receptor to transduce a signal and mobilize calcium in response to a small peptide agonist. Post-translationally, phosphorylated on serine residues in response to C5a binding, resulting in internalization of the receptor and short-term desensitization to C5a. In terms of tissue distribution, expressed strongly in macrophages and spleen. Weak expression detected in lung, liver, brain, heart and kidney.

The protein localises to the cell membrane. It is found in the cytoplasmic vesicle. In terms of biological role, receptor for the chemotactic and inflammatory peptide anaphylatoxin C5a. The ligand interacts with at least two sites on the receptor: a high-affinity site on the extracellular N-terminus, and a second site in the transmembrane region which activates downstream signaling events. Receptor activation stimulates chemotaxis, granule enzyme release, intracellular calcium release and superoxide anion production. This is C5a anaphylatoxin chemotactic receptor 1 (C5AR1) from Cavia porcellus (Guinea pig).